The chain runs to 265 residues: Tryptophan synthase alpha chain (265 aa).

Active-site proton acceptor residues include Glu49 and Asp60.

The protein belongs to the TrpA family. As to quaternary structure, tetramer of two alpha and two beta chains.

It carries out the reaction (1S,2R)-1-C-(indol-3-yl)glycerol 3-phosphate + L-serine = D-glyceraldehyde 3-phosphate + L-tryptophan + H2O. It functions in the pathway amino-acid biosynthesis; L-tryptophan biosynthesis; L-tryptophan from chorismate: step 5/5. Functionally, the alpha subunit is responsible for the aldol cleavage of indoleglycerol phosphate to indole and glyceraldehyde 3-phosphate. This is Tryptophan synthase alpha chain from Desulfatibacillum aliphaticivorans.